The primary structure comprises 432 residues: PC-esterase domain-containing protein 1B (432 aa).

Disordered regions lie at residues Glu-264 to Pro-293 and Arg-398 to Gln-432.

This sequence belongs to the PC-esterase family.

This Homo sapiens (Human) protein is PC-esterase domain-containing protein 1B.